A 681-amino-acid chain; its full sequence is Nucleolar GTP-binding protein 1 (681 aa).

The 172-residue stretch at 170 to 341 folds into the OBG-type G domain; that stretch reads RTLILCGFPN…LRDRACDELL (172 aa). GTP is bound by residues 176-183, 222-226, and 290-293; these read GFPNVGKS, DTPGI, and NKVD.

This sequence belongs to the TRAFAC class OBG-HflX-like GTPase superfamily. OBG GTPase family. NOG subfamily. As to expression, ubiquitously expressed.

The protein localises to the nucleus. Its subcellular location is the nucleolus. In terms of biological role, involved in the biogenesis of the 60S ribosomal subunit. Has a role in regulating longevity, growth and brood size. May regulate fat storage via the insulin/IGF pathway. In Caenorhabditis elegans, this protein is Nucleolar GTP-binding protein 1.